The chain runs to 250 residues: Galectin-3 (250 aa).

Residues 1–60 (MADNFSLHDALSGSGNPNPQGWPGAWGNQPAGAGGYPGASYPGAYPGQAPPGAYPGQAPP) form a disordered region. Ala-2 carries the N-acetylalanine modification. Residues Ser-6 and Ser-12 each carry the phosphoserine modification. Tandem repeats lie at residues 36 to 44 (YPGASYPGA), 45 to 53 (YPGQAPPGA), and 54 to 62 (YPGQAPPGA). The tract at residues 36–109 (YPGASYPGAY…AYPATGPYGA (74 aa)) is 8 X 9 AA tandem repeats of Y-P-G-X(3)-P-G-A. The segment covering 38-47 (GASYPGAYPG) has biased composition (low complexity). Residues 48-60 (QAPPGAYPGQAPP) show a composition bias toward pro residues. One copy of the 4; approximate repeat lies at 63 to 69 (YPGAPGA). Repeat 5 spans residues 70-78 (YPGAPAPGV). One copy of the 6; approximate repeat lies at 79-88 (YPGPPSGPGA). One copy of the 7; approximate repeat lies at 89 to 100 (YPSSGQPSATGA). One copy of the 8; approximate repeat lies at 101 to 109 (YPATGPYGA). The Galectin domain maps to 118–248 (YNLPLPGGVV…DIDLTSASYT (131 aa)). 181-187 (WGREERQ) lines the a beta-D-galactoside pocket. At Ser-188 the chain carries Phosphoserine. Residues 226-241 (KKLNEISKLGISGDID) carry the Nuclear export signal motif.

In terms of assembly, probably forms homo- or heterodimers. Interacts with DMBT1. Interacts with CD6 and ALCAM. Forms a complex with the ITGA3, ITGB1 and CSPG4. Interacts with LGALS3BP, LYPD3, ZFTRAF1 and UACA. Interacts with TRIM16; this interaction mediates autophagy of damage endomembranes. Interacts with cargo receptor TMED10; the interaction mediates the translocation from the cytoplasm into the ERGIC (endoplasmic reticulum-Golgi intermediate compartment) and thereby secretion. In terms of tissue distribution, a major expression is found in the colonic epithelium. It is also abundant in the activated macrophages. Expressed in fetal membranes.

The protein localises to the cytoplasm. It localises to the nucleus. The protein resides in the secreted. In terms of biological role, galactose-specific lectin which binds IgE. May mediate with the alpha-3, beta-1 integrin the stimulation by CSPG4 of endothelial cells migration. Together with DMBT1, required for terminal differentiation of columnar epithelial cells during early embryogenesis. In the nucleus: acts as a pre-mRNA splicing factor. Involved in acute inflammatory responses including neutrophil activation and adhesion, chemoattraction of monocytes macrophages, opsonization of apoptotic neutrophils, and activation of mast cells. Together with TRIM16, coordinates the recognition of membrane damage with mobilization of the core autophagy regulators ATG16L1 and BECN1 in response to damaged endomembranes. The protein is Galectin-3 of Homo sapiens (Human).